A 66-amino-acid polypeptide reads, in one-letter code: Large ribosomal subunit protein bL33B (66 aa).

The protein belongs to the bacterial ribosomal protein bL33 family.

This chain is Large ribosomal subunit protein bL33B, found in Synechococcus sp. (strain CC9605).